The sequence spans 299 residues: Ankyrin repeat domain-containing protein 54 (299 aa).

The segment at 1–32 (MAAAAGGADDESRSGRSSSDGECAVAPEPLTG) is disordered. An N-acetylalanine modification is found at Ala-2. Phosphoserine occurs at positions 57 and 62. The Nuclear localization signal (NLS) motif lies at 98–116 (RRLGPTGKEVHALKRLRDS). ANK repeat units lie at residues 108–137 (HALK…DPCA), 141–170 (KGRT…DPNQ), 174–203 (LGNT…RVDA), and 207–239 (AGRT…EVKQ). The segment at 140-240 (DKGRTALHFA…EAVRLEVKQI (101 aa)) is LYN-binding. The Nuclear export signal (NES) signature appears at 282-292 (LLASFTSLSLQ).

Interacts (via ankyrin repeat region) with LYN (via SH3-domain) in an activation-independent status of LYN. Forms a multiprotein complex with LYN and HCLS1. Interacts with TSN2, VAV1, DBNL and LASP1.

It localises to the nucleus. It is found in the cytoplasm. Its subcellular location is the midbody. Functionally, plays an important role in regulating intracellular signaling events associated with erythroid terminal differentiation. This is Ankyrin repeat domain-containing protein 54 (ANKRD54) from Bos taurus (Bovine).